Here is a 113-residue protein sequence, read N- to C-terminus: Probable UPF0122 protein (113 aa).

It belongs to the UPF0122 family.

Its function is as follows. Might take part in the signal recognition particle (SRP) pathway. This is inferred from the conservation of its genetic proximity to ftsY/ffh. May be a regulatory protein. The protein is Probable UPF0122 protein of Mycoplasma mycoides.